The chain runs to 291 residues: Acetyl-coenzyme A carboxylase carboxyl transferase subunit beta (291 aa).

In terms of domain architecture, CoA carboxyltransferase N-terminal spans 29–291 (LWSKCPECGE…MHQQPAAVSA (263 aa)). Positions 33, 36, 52, and 55 each coordinate Zn(2+). A C4-type zinc finger spans residues 33–55 (CPECGEVVYRKDLIANASVCASC).

Belongs to the AccD/PCCB family. As to quaternary structure, acetyl-CoA carboxylase is a heterohexamer composed of biotin carboxyl carrier protein (AccB), biotin carboxylase (AccC) and two subunits each of ACCase subunit alpha (AccA) and ACCase subunit beta (AccD). Zn(2+) serves as cofactor.

The protein localises to the cytoplasm. The enzyme catalyses N(6)-carboxybiotinyl-L-lysyl-[protein] + acetyl-CoA = N(6)-biotinyl-L-lysyl-[protein] + malonyl-CoA. The protein operates within lipid metabolism; malonyl-CoA biosynthesis; malonyl-CoA from acetyl-CoA: step 1/1. Component of the acetyl coenzyme A carboxylase (ACC) complex. Biotin carboxylase (BC) catalyzes the carboxylation of biotin on its carrier protein (BCCP) and then the CO(2) group is transferred by the transcarboxylase to acetyl-CoA to form malonyl-CoA. This chain is Acetyl-coenzyme A carboxylase carboxyl transferase subunit beta, found in Synechococcus sp. (strain RCC307).